The primary structure comprises 498 residues: Elastase (498 aa).

Positions 1-23 (MKKVSTLDLLFVAIMGVSPAAFA) are cleaved as a signal peptide. A propeptide spanning residues 24-197 (ADLIDVSKLP…VLDQWEGLAH (174 aa)) is cleaved from the precursor. A disulfide bridge links cysteine 227 with cysteine 255. A Ca(2+)-binding site is contributed by aspartate 333. Histidine 337 lines the Zn(2+) pocket. Glutamate 338 is a catalytic residue. 2 residues coordinate Zn(2+): histidine 341 and glutamate 361. Positions 369, 372, 380, and 382 each coordinate Ca(2+). Histidine 420 functions as the Proton donor in the catalytic mechanism. A disulfide bridge connects residues cysteine 467 and cysteine 494.

The protein belongs to the peptidase M4 family. As to quaternary structure, monomer. Ca(2+) serves as cofactor. It depends on Zn(2+) as a cofactor. Post-translationally, made as a membrane-associated pre-pro-protein, which is exported to the periplasm (yielding pro-elastase) with removal of the signal peptide. Under certain conditions pro-elastase can accumulate. The pro-peptide is removed in the periplasm yielding a (mature length) 33 kDa protein, probably by autocatalysis. The pro-peptide probably remains associated with elastase and can be secreted. Further alterations (perhaps processing) seems to be required before secretion into the extracellular space.

It is found in the secreted. The catalysed reaction is Hydrolysis of proteins including elastin, collagen types III and IV, fibronectin and immunoglobulin A, generally with bulky hydrophobic group at P1'. Insulin B chain cleavage pattern identical to that of thermolysin, but specificity differs in other respects.. With respect to regulation, inhibited by phosphoramidon. Cleaves host elastin, collagen, IgG, and several complement components as well as endogenous pro-aminopeptidase. Autocatalyses processing of its pro-peptide. Processes the pro-peptide of pro-chitin-binding protein (cbpD). Involved in the pathogenesis of P.aeruginosa infections. In Pseudomonas aeruginosa (strain ATCC 15692 / DSM 22644 / CIP 104116 / JCM 14847 / LMG 12228 / 1C / PRS 101 / PAO1), this protein is Elastase (lasB).